The primary structure comprises 514 residues: Maturase K (514 aa).

The protein belongs to the intron maturase 2 family. MatK subfamily.

It is found in the plastid. The protein localises to the chloroplast. In terms of biological role, usually encoded in the trnK tRNA gene intron. Probably assists in splicing its own and other chloroplast group II introns. This chain is Maturase K, found in Plantago argentea (Silver plantain).